Consider the following 89-residue polypeptide: Small ribosomal subunit protein uS15 (89 aa).

This sequence belongs to the universal ribosomal protein uS15 family. In terms of assembly, part of the 30S ribosomal subunit. Forms a bridge to the 50S subunit in the 70S ribosome, contacting the 23S rRNA.

Its function is as follows. One of the primary rRNA binding proteins, it binds directly to 16S rRNA where it helps nucleate assembly of the platform of the 30S subunit by binding and bridging several RNA helices of the 16S rRNA. In terms of biological role, forms an intersubunit bridge (bridge B4) with the 23S rRNA of the 50S subunit in the ribosome. This chain is Small ribosomal subunit protein uS15, found in Nitrosospira multiformis (strain ATCC 25196 / NCIMB 11849 / C 71).